The chain runs to 172 residues: Putative RNA polymerase II transcriptional coactivator (172 aa).

Disordered regions lie at residues 1 to 43 and 123 to 172; these read MPPK…QDGN and QTDA…DDDE. The segment covering 24-43 has biased composition (polar residues); the sequence is GNTGKAQPQELTKGSDQDGN. Basic and acidic residues predominate over residues 131-144; the sequence is PKVKALESNKESIK. Acidic residues predominate over residues 158-172; it reads TSDEEEAAEDEDDDE.

It belongs to the transcriptional coactivator PC4 family.

It is found in the nucleus. In terms of biological role, general coactivator that functions cooperatively with TAFs and mediates functional interactions between upstream activators and the general transcriptional machinery. Binds single-stranded DNA. The sequence is that of Putative RNA polymerase II transcriptional coactivator from Neurospora crassa (strain ATCC 24698 / 74-OR23-1A / CBS 708.71 / DSM 1257 / FGSC 987).